Consider the following 242-residue polypeptide: MGRGPSIEGRKNASDAKRGKMFTKIIREISVAARAGGGDPSNNPRLRTAMDKGLSANMSKDVIERAIKKSTGELEGVEYEEVRYEGYAPGGVAVIVDCLTDNRVRTVADVRHAFSKCGGNMGTEGSVAFMFKRLGVLSFAAGIDEDTLTDAAIDAGADDVVVYPEDGAIDVLTAPDAFAQVRDALAAAGLEPAHAEIAFRADNDIVVDGDTAVQVRKLLDMLEDLDDVQDVYSNVDQAALGA.

The protein belongs to the TACO1 family.

The protein resides in the cytoplasm. The sequence is that of Probable transcriptional regulatory protein PXO_01555 from Xanthomonas oryzae pv. oryzae (strain PXO99A).